A 370-amino-acid polypeptide reads, in one-letter code: N-acetyldiaminopimelate deacetylase (370 aa).

Residue aspartate 67 is part of the active site. Glutamate 126 (proton acceptor) is an active-site residue.

The protein belongs to the peptidase M20A family. N-acetyldiaminopimelate deacetylase subfamily.

The catalysed reaction is N-acetyl-(2S,6S)-2,6-diaminopimelate + H2O = (2S,6S)-2,6-diaminopimelate + acetate. The protein operates within amino-acid biosynthesis; L-lysine biosynthesis via DAP pathway; LL-2,6-diaminopimelate from (S)-tetrahydrodipicolinate (acetylase route): step 3/3. Its function is as follows. Catalyzes the conversion of N-acetyl-diaminopimelate to diaminopimelate and acetate. The protein is N-acetyldiaminopimelate deacetylase of Exiguobacterium sibiricum (strain DSM 17290 / CCUG 55495 / CIP 109462 / JCM 13490 / 255-15).